The primary structure comprises 853 residues: MKFGFIAHPTSVGLKRYVKMIDLLQRNSTELHSGYKRDLWRRENLVPFMNFAKITSATGATCEGVIKYMPLVADEMLADARGIANRVVSGIEELVEDGAELVGLGGFTSIVGRRGEATAEKSPVPVTSGNSLTTYAGYKALMQIQSWLDIQPEQEPVAIVGYPGSICLALSRLLLAQGFSLHLLHRAGHKDEDELLSHLPEQYRSRVTLTSDPEDLYPRCKLFVAATSAGGVIDPYKLQPGSVFIDVALPRDINSDTRPDRDDILIIDGGCVTATDAVKLGGESLNVTIKQQLNGCMAETIVLALENRRENFSLGRYLALDNVLEIGELAEKHGFLVYPLASYGERIDRQRVINLKRYYHHDIYSDEPDTEQPPASQLAFIDAIIAQDPAREDTLDRYHQFINPMMVEFLKLQHCDNVFRRASGTQLFTADGEAFLDMVAGYGCINLGHNPQPIIDALKAYLDAQGPNFIQYISIPEQAAKLAEVLCHFAPGNMGRVFFSNSGTEAVEAAMKLAKASTGKAGIAYLKNSYHGKTLGALSITGREKHRRHFKPLLASMIEVPFADIEALRQTLSRDDIGALMIEPIQGEGGVHVPPPGYLRTVQEICRQTDTLLMVDEVQTGLGRTGKLFACEWEGIEPDVLMLSKSLSGGVMPIGATLCRAIFGNGPYGTADRFLMHSSTFGGGNIAAVVALSALREILAQDLVGNAERLGTYFKQALTDVAARYPFVAEIAGRGLMLGIQFDQTFAGAVGASAREFATRLPGDWHTTWKFLPDPVQAHLKAAMERMEQSLGEMFCMKFVTKLCQDHNILTFITANSSTVIRIQPPLTISKAEIDRFVSAFATVCDELSTFLE.

Residue 503 to 504 (GT) participates in pyridoxal 5'-phosphate binding. An N6-(pyridoxal phosphate)lysine modification is found at Lys-645. Pyridoxal 5'-phosphate is bound at residue Thr-680.

Belongs to the class-III pyridoxal-phosphate-dependent aminotransferase family. In terms of assembly, homodimer. Pyridoxal 5'-phosphate is required as a cofactor.

The protein operates within antibiotic biosynthesis; prodigiosin biosynthesis. Involved in the biosynthesis of 2-methyl-3-n-amyl-pyrrole (MAP), one of the terminal products involved in the biosynthesis of the red antibiotic prodigiosin (Pig). Catalyzes the transamination to the aldehyde group of 3-acetyloctanal, resulting in an aminoketone, which spontaneously cyclizes to yield the dihydro form of MAP (H2MAP). The polypeptide is Aminotransferase PigE (Serratia sp. (strain ATCC 39006) (Prodigiosinella confusarubida)).